The primary structure comprises 220 residues: 6-phosphogluconolactonase (220 aa).

It belongs to the glucosamine/galactosamine-6-phosphate isomerase family. 6-phosphogluconolactonase subfamily.

It carries out the reaction 6-phospho-D-glucono-1,5-lactone + H2O = 6-phospho-D-gluconate + H(+). It functions in the pathway carbohydrate degradation; pentose phosphate pathway; D-ribulose 5-phosphate from D-glucose 6-phosphate (oxidative stage): step 2/3. Hydrolysis of 6-phosphogluconolactone to 6-phosphogluconate. This is 6-phosphogluconolactonase (pgl) from Thermotoga maritima (strain ATCC 43589 / DSM 3109 / JCM 10099 / NBRC 100826 / MSB8).